Consider the following 201-residue polypeptide: Large ribosomal subunit protein uL4 (201 aa).

Residues 42–67 (GNSAQKTRSEVSGGGKKPWNQKGTGR) are disordered.

This sequence belongs to the universal ribosomal protein uL4 family. Part of the 50S ribosomal subunit.

Functionally, one of the primary rRNA binding proteins, this protein initially binds near the 5'-end of the 23S rRNA. It is important during the early stages of 50S assembly. It makes multiple contacts with different domains of the 23S rRNA in the assembled 50S subunit and ribosome. In terms of biological role, forms part of the polypeptide exit tunnel. The protein is Large ribosomal subunit protein uL4 of Legionella pneumophila (strain Lens).